The primary structure comprises 326 residues: Undecaprenyl-phosphate 4-deoxy-4-formamido-L-arabinose transferase (326 aa).

Transmembrane regions (helical) follow at residues 235-255 and 270-290; these read LLSV…VLLI and VFTL…GMGL.

It belongs to the glycosyltransferase 2 family.

The protein resides in the cell inner membrane. The catalysed reaction is UDP-4-deoxy-4-formamido-beta-L-arabinose + di-trans,octa-cis-undecaprenyl phosphate = 4-deoxy-4-formamido-alpha-L-arabinopyranosyl di-trans,octa-cis-undecaprenyl phosphate + UDP. Its pathway is glycolipid biosynthesis; 4-amino-4-deoxy-alpha-L-arabinose undecaprenyl phosphate biosynthesis; 4-amino-4-deoxy-alpha-L-arabinose undecaprenyl phosphate from UDP-4-deoxy-4-formamido-beta-L-arabinose and undecaprenyl phosphate: step 1/2. The protein operates within bacterial outer membrane biogenesis; lipopolysaccharide biosynthesis. Catalyzes the transfer of 4-deoxy-4-formamido-L-arabinose from UDP to undecaprenyl phosphate. The modified arabinose is attached to lipid A and is required for resistance to polymyxin and cationic antimicrobial peptides. The protein is Undecaprenyl-phosphate 4-deoxy-4-formamido-L-arabinose transferase of Serratia proteamaculans (strain 568).